A 141-amino-acid chain; its full sequence is Large ribosomal subunit protein mL42 (141 aa).

A mitochondrion-targeting transit peptide spans 1 to 31 (MTAAVKWAVSHRTIWRHLFPIQNGAISSACH).

The protein belongs to the mitochondrion-specific ribosomal protein mL42 family. As to quaternary structure, component of the mitochondrial ribosome large subunit (39S) which comprises a 16S rRNA and about 50 distinct proteins. Component of the mitochondrial ribosome small subunit (28S) which comprises a 12S rRNA and about 30 distinct proteins.

It localises to the mitochondrion. The chain is Large ribosomal subunit protein mL42 (Mrpl42) from Rattus norvegicus (Rat).